A 286-amino-acid polypeptide reads, in one-letter code: Elongation factor Ts (286 aa).

An involved in Mg(2+) ion dislocation from EF-Tu region spans residues 79–82; that stretch reads TDFV.

The protein belongs to the EF-Ts family.

The protein resides in the cytoplasm. Functionally, associates with the EF-Tu.GDP complex and induces the exchange of GDP to GTP. It remains bound to the aminoacyl-tRNA.EF-Tu.GTP complex up to the GTP hydrolysis stage on the ribosome. The chain is Elongation factor Ts from Wolbachia sp. subsp. Drosophila simulans (strain wRi).